Here is a 147-residue protein sequence, read N- to C-terminus: uncharacterized protein (147 aa).

This is an uncharacterized protein from Mycobacterium tuberculosis (strain CDC 1551 / Oshkosh).